Reading from the N-terminus, the 119-residue chain is Large ribosomal subunit protein bL20 (119 aa).

It belongs to the bacterial ribosomal protein bL20 family.

Binds directly to 23S ribosomal RNA and is necessary for the in vitro assembly process of the 50S ribosomal subunit. It is not involved in the protein synthesizing functions of that subunit. The sequence is that of Large ribosomal subunit protein bL20 from Mycoplasma capricolum subsp. capricolum (strain California kid / ATCC 27343 / NCTC 10154).